Here is a 643-residue protein sequence, read N- to C-terminus: Threonine--tRNA ligase (643 aa).

Positions 1 to 61 (MIKITLKDGS…NEDSSLEICT (61 aa)) constitute a TGS domain. Residues 240 to 540 (DHNKLGRELG…LIEKYAGALP (301 aa)) are catalytic. 3 residues coordinate Zn(2+): Cys-335, His-386, and His-517.

Belongs to the class-II aminoacyl-tRNA synthetase family. In terms of assembly, homodimer. Zn(2+) serves as cofactor.

The protein localises to the cytoplasm. The catalysed reaction is tRNA(Thr) + L-threonine + ATP = L-threonyl-tRNA(Thr) + AMP + diphosphate + H(+). Functionally, catalyzes the attachment of threonine to tRNA(Thr) in a two-step reaction: L-threonine is first activated by ATP to form Thr-AMP and then transferred to the acceptor end of tRNA(Thr). Also edits incorrectly charged L-seryl-tRNA(Thr). The sequence is that of Threonine--tRNA ligase from Clostridium perfringens (strain SM101 / Type A).